Reading from the N-terminus, the 1682-residue chain is Cilia- and flagella-associated protein 43 (1682 aa).

6 WD repeats span residues 168-207 (NPGMDVSQMSFNPMNWHQMCLSSSSAMSVWTIERSNQEHH), 262-305 (PKDD…VTVL), 315-354 (DGAPLINPLTLVYQKDGILASGIDGVIYSFIIKDSKYQVK), 358-397 (EFDGPVTHLVFSPSYKMLLIQTDKGSVYIYTFGAEMPLDK), 488-527 (LSQSPVKIVTYDQRGIFLLVGTEEGNIFVIDARPSKSFQI), and 697-738 (SHQG…ANIA). Positions 767–790 (RESTNEQQEETTESQKHLNSDSSE) are disordered. Coiled-coil stretches lie at residues 926–960 (KERTEEELQELSKVMQQKKTEIECLKLRKEIVEVQ) and 1171–1223 (SEDE…HLKR).

The protein belongs to the CFAP43 family. Expressed in testis. Expressed in the lung, brain, oviduct and nasal cavity.

It localises to the cell projection. Its subcellular location is the cilium. It is found in the flagellum. The protein localises to the cytoplasm. The protein resides in the cytoskeleton. It localises to the flagellum axoneme. Its subcellular location is the cilium axoneme. Its function is as follows. Flagellar protein involved in sperm flagellum axoneme organization and function. Involved in the regulation of the beating frequency of motile cilia on the epithelial cells of the respiratory tract. In Mus musculus (Mouse), this protein is Cilia- and flagella-associated protein 43.